Here is a 309-residue protein sequence, read N- to C-terminus: Dehydrogenase/reductase SDR family member 7B (309 aa).

Residues 1 to 4 (MDLT) lie on the Cytoplasmic side of the membrane. Residues 5–25 (TWAIFPLLLGSIGVYSLYKLL) traverse the membrane as a helical; Signal-anchor for type II membrane protein segment. Residues 26 to 272 (QRLRSGAYLQ…AVGERRKELL (247 aa)) lie on the Lumenal side of the membrane. NAD(+) contacts are provided by serine 46 and leucine 48. Serine 178 lines the substrate pocket. 3 residues coordinate NAD(+): tyrosine 191, lysine 195, and threonine 226. Residue tyrosine 191 is the Proton acceptor of the active site.

It belongs to the short-chain dehydrogenases/reductases (SDR) family.

The protein resides in the endoplasmic reticulum membrane. In terms of biological role, putative oxidoreductase. The sequence is that of Dehydrogenase/reductase SDR family member 7B (dhrs7b) from Xenopus tropicalis (Western clawed frog).